Consider the following 338-residue polypeptide: Anthranilate phosphoribosyltransferase (338 aa).

Residues glycine 81, 84-85 (GD), serine 89, 91-94 (NVST), 109-117 (KHGNRALSS), and alanine 121 contribute to the 5-phospho-alpha-D-ribose 1-diphosphate site. Glycine 81 provides a ligand contact to anthranilate. Serine 93 serves as a coordination point for Mg(2+). Residue asparagine 112 coordinates anthranilate. Arginine 167 contacts anthranilate. Mg(2+) contacts are provided by aspartate 226 and glutamate 227.

This sequence belongs to the anthranilate phosphoribosyltransferase family. In terms of assembly, homodimer. It depends on Mg(2+) as a cofactor.

It carries out the reaction N-(5-phospho-beta-D-ribosyl)anthranilate + diphosphate = 5-phospho-alpha-D-ribose 1-diphosphate + anthranilate. Its pathway is amino-acid biosynthesis; L-tryptophan biosynthesis; L-tryptophan from chorismate: step 2/5. Its function is as follows. Catalyzes the transfer of the phosphoribosyl group of 5-phosphorylribose-1-pyrophosphate (PRPP) to anthranilate to yield N-(5'-phosphoribosyl)-anthranilate (PRA). The protein is Anthranilate phosphoribosyltransferase of Rhodopseudomonas palustris (strain ATCC BAA-98 / CGA009).